The chain runs to 231 residues: MKIGIIGAMEPEVAHLIAAMTNATSQTIAGIEFIAGTLAGKDVVVTRSGIGKVAASIATTLLIEKYAPDAVINTGSAGGFVDTLAIGDIVISSEVRHHDVDVTAFGYEIGQMAQQPAAFIPAAHLVEAANKAIAQLGEVKAIEGLICTGDSFICDPVRTQAMLKNFPTMAACEMEGAAIAQVCHQFGVPFVVIRSLSDNANNDSPVDFDSYIVKAGYHSALMVMLLLEQLK.

Residue Glu12 is the Proton acceptor of the active site. Residues Gly78, Ile153, and 174–175 (ME) each bind substrate. Catalysis depends on Asp198, which acts as the Proton donor.

It belongs to the PNP/UDP phosphorylase family. MtnN subfamily.

It carries out the reaction S-adenosyl-L-homocysteine + H2O = S-(5-deoxy-D-ribos-5-yl)-L-homocysteine + adenine. The catalysed reaction is S-methyl-5'-thioadenosine + H2O = 5-(methylsulfanyl)-D-ribose + adenine. The enzyme catalyses 5'-deoxyadenosine + H2O = 5-deoxy-D-ribose + adenine. It functions in the pathway amino-acid biosynthesis; L-methionine biosynthesis via salvage pathway; S-methyl-5-thio-alpha-D-ribose 1-phosphate from S-methyl-5'-thioadenosine (hydrolase route): step 1/2. Functionally, catalyzes the irreversible cleavage of the glycosidic bond in both 5'-methylthioadenosine (MTA) and S-adenosylhomocysteine (SAH/AdoHcy) to adenine and the corresponding thioribose, 5'-methylthioribose and S-ribosylhomocysteine, respectively. Also cleaves 5'-deoxyadenosine, a toxic by-product of radical S-adenosylmethionine (SAM) enzymes, into 5-deoxyribose and adenine. In Shewanella putrefaciens (strain CN-32 / ATCC BAA-453), this protein is 5'-methylthioadenosine/S-adenosylhomocysteine nucleosidase.